A 421-amino-acid chain; its full sequence is MTFEATEYAKSIATKAKEASRALKSLTTLQKNSVLKRVETLLLENETAIIKENQIDLQNGIQKGLSSAMMDRLLLDSKRIQSMAKSIEEIRNLPDPVGEVVRGTILPNGLELLTKRVPIGVVMTIFESRPNVIVDIASLSFKSGNACILRGGSEAYHSNLILSSLFHQAIGESNLPSVTKDVVSFVENTDREAMVPFFQLDDLIDVIVPRGGEALIRFVSENSKIPVIKHDKGVTNLYLSNKAKEDIVLPILINSKVQRPGVCNALENLFIHKDYPHIQTLLSDLQKAGVQVLGDQSTQSIFPNLPLATEADFYTEFLDTRLSVKIVKSVEDAMQNIQNYSSGHTECILSEDESEIQTFRQGLDSAAIFVNCSTRFHDGGEFGLGAEVGISTGKLHVRGPMGLIHLTTTTTYVTGKGQVRG.

Belongs to the gamma-glutamyl phosphate reductase family.

The protein resides in the cytoplasm. It catalyses the reaction L-glutamate 5-semialdehyde + phosphate + NADP(+) = L-glutamyl 5-phosphate + NADPH + H(+). The protein operates within amino-acid biosynthesis; L-proline biosynthesis; L-glutamate 5-semialdehyde from L-glutamate: step 2/2. In terms of biological role, catalyzes the NADPH-dependent reduction of L-glutamate 5-phosphate into L-glutamate 5-semialdehyde and phosphate. The product spontaneously undergoes cyclization to form 1-pyrroline-5-carboxylate. The sequence is that of Gamma-glutamyl phosphate reductase from Leptospira biflexa serovar Patoc (strain Patoc 1 / ATCC 23582 / Paris).